The sequence spans 101 residues: Large ribosomal subunit protein uL23 (101 aa).

It belongs to the universal ribosomal protein uL23 family. In terms of assembly, part of the 50S ribosomal subunit. Contacts protein L29, and trigger factor when it is bound to the ribosome.

Its function is as follows. One of the early assembly proteins it binds 23S rRNA. One of the proteins that surrounds the polypeptide exit tunnel on the outside of the ribosome. Forms the main docking site for trigger factor binding to the ribosome. The polypeptide is Large ribosomal subunit protein uL23 (Micrococcus luteus (strain ATCC 4698 / DSM 20030 / JCM 1464 / CCM 169 / CCUG 5858 / IAM 1056 / NBRC 3333 / NCIMB 9278 / NCTC 2665 / VKM Ac-2230) (Micrococcus lysodeikticus)).